The sequence spans 105 residues: Large ribosomal subunit protein bL21 (105 aa).

The protein belongs to the bacterial ribosomal protein bL21 family. In terms of assembly, part of the 50S ribosomal subunit. Contacts protein L20.

Functionally, this protein binds to 23S rRNA in the presence of protein L20. This chain is Large ribosomal subunit protein bL21, found in Stenotrophomonas maltophilia (strain R551-3).